A 340-amino-acid chain; its full sequence is L-threonine 3-dehydrogenase (340 aa).

Cys38 is a binding site for Zn(2+). Residues Thr40 and His43 each act as charge relay system in the active site. Zn(2+) contacts are provided by His63, Glu64, Cys93, Cys96, Cys99, and Cys107. NAD(+)-binding positions include Ile175, Asp195, Arg200, 261 to 263 (LGI), and 285 to 286 (IY).

It belongs to the zinc-containing alcohol dehydrogenase family. Homotetramer. Requires Zn(2+) as cofactor.

Its subcellular location is the cytoplasm. The enzyme catalyses L-threonine + NAD(+) = (2S)-2-amino-3-oxobutanoate + NADH + H(+). It functions in the pathway amino-acid degradation; L-threonine degradation via oxydo-reductase pathway; glycine from L-threonine: step 1/2. Its function is as follows. Catalyzes the NAD(+)-dependent oxidation of L-threonine to 2-amino-3-ketobutyrate. The chain is L-threonine 3-dehydrogenase from Xanthomonas campestris pv. campestris (strain ATCC 33913 / DSM 3586 / NCPPB 528 / LMG 568 / P 25).